The following is a 156-amino-acid chain: Small ribosomal subunit protein uS7 (156 aa).

Belongs to the universal ribosomal protein uS7 family. Part of the 30S ribosomal subunit. Contacts proteins S9 and S11.

In terms of biological role, one of the primary rRNA binding proteins, it binds directly to 16S rRNA where it nucleates assembly of the head domain of the 30S subunit. Is located at the subunit interface close to the decoding center, probably blocks exit of the E-site tRNA. This Carsonella ruddii (strain PV) protein is Small ribosomal subunit protein uS7.